The primary structure comprises 388 residues: 4-hydroxycoumarin synthase 2 (388 aa).

Residue Cys-159 is part of the active site.

It belongs to the thiolase-like superfamily. Chalcone/stilbene synthases family. In terms of assembly, homodimer.

It carries out the reaction 2-hydroxybenzoyl-CoA + malonyl-CoA = 4-hydroxycoumarin + CO2 + 2 CoA. In terms of biological role, type III polyketide synthase involved preferentially in the biosynthesis of 4-hydroxycoumarin from salicoyl-CoA. Can also use benzoyl-CoA and malonyl-CoA to produce 3,5-dihydroxybiphenyl as a major product and benzoyldiacetic acid lactone as a minor side product. Can also use m-hydroxybenzoyl-CoA as substrate, producing m-hydroxybenzoyl diacetic acid lactone as a derailment product. No activity with p-hydroxybenzoyl-CoA, CoA-linked cinnamic acids or acetyl-CoA. The sequence is that of 4-hydroxycoumarin synthase 2 (BIS3) from Sorbus aucuparia (European mountain ash).